We begin with the raw amino-acid sequence, 137 residues long: 15.7 kDa heat shock protein, peroxisomal (137 aa).

Residues 15-134 (QEWSRSTALI…SSKVRNVNIT (120 aa)) enclose the sHSP domain. The Microbody targeting signal motif lies at 135-137 (SKL).

It belongs to the small heat shock protein (HSP20) family. May form oligomeric structures.

The protein localises to the peroxisome. In terms of biological role, possesses chaperone activity. The polypeptide is 15.7 kDa heat shock protein, peroxisomal (HSP15.7) (Arabidopsis thaliana (Mouse-ear cress)).